A 380-amino-acid polypeptide reads, in one-letter code: Cytochrome b (380 aa).

A run of 4 helical transmembrane segments spans residues 34-54, 78-99, 114-134, and 179-199; these read FGSL…LLAA, WLIR…YLHI, WNTG…GYVL, and FFTL…IHLT. 2 residues coordinate heme b: histidine 84 and histidine 98. Histidine 183 and histidine 197 together coordinate heme b. Position 202 (histidine 202) interacts with a ubiquinone. A run of 4 helical transmembrane segments spans residues 227–247, 289–309, 321–341, and 348–368; these read LKDI…ALFS, LGGV…PLLH, FSQL…WVGS, and FIII…ILFP.

It belongs to the cytochrome b family. As to quaternary structure, the cytochrome bc1 complex contains 11 subunits: 3 respiratory subunits (MT-CYB, CYC1 and UQCRFS1), 2 core proteins (UQCRC1 and UQCRC2) and 6 low-molecular weight proteins (UQCRH/QCR6, UQCRB/QCR7, UQCRQ/QCR8, UQCR10/QCR9, UQCR11/QCR10 and a cleavage product of UQCRFS1). This cytochrome bc1 complex then forms a dimer. It depends on heme b as a cofactor.

The protein resides in the mitochondrion inner membrane. Functionally, component of the ubiquinol-cytochrome c reductase complex (complex III or cytochrome b-c1 complex) that is part of the mitochondrial respiratory chain. The b-c1 complex mediates electron transfer from ubiquinol to cytochrome c. Contributes to the generation of a proton gradient across the mitochondrial membrane that is then used for ATP synthesis. The chain is Cytochrome b (MT-CYB) from Antigone antigone (Sarus crane).